The chain runs to 560 residues: Dimethylaniline monooxygenase [N-oxide-forming] 4 (560 aa).

FAD contacts are provided by residues glycine 9 to serine 13, glutamate 32, and leucine 40 to tryptophan 41. NADP(+) contacts are provided by residues threonine 60–asparagine 61 and threonine 195–aspartate 198. The chain crosses the membrane as a helical span at residues alanine 519 to valine 539.

Belongs to the FMO family. FAD is required as a cofactor. As to expression, detected in liver and kidney (at protein level).

The protein resides in the microsome membrane. Its subcellular location is the endoplasmic reticulum membrane. It carries out the reaction N,N-dimethylaniline + NADPH + O2 + H(+) = N,N-dimethylaniline N-oxide + NADP(+) + H2O. Its function is as follows. This protein is involved in the oxidative metabolism of a variety of xenobiotics such as drugs and pesticides. In Rattus norvegicus (Rat), this protein is Dimethylaniline monooxygenase [N-oxide-forming] 4 (Fmo4).